Consider the following 334-residue polypeptide: DNA-directed RNA polymerase subunit alpha (334 aa).

The segment at 1-233 (MADQTISNVL…NLFTPLVSQE (233 aa)) is alpha N-terminal domain (alpha-NTD). Residues 263 to 334 (DNENSYNLYN…QLKKRFKIQL (72 aa)) are alpha C-terminal domain (alpha-CTD).

The protein belongs to the RNA polymerase alpha chain family. In plastids the minimal PEP RNA polymerase catalytic core is composed of four subunits: alpha, beta, beta', and beta''. When a (nuclear-encoded) sigma factor is associated with the core the holoenzyme is formed, which can initiate transcription.

The protein resides in the plastid. It localises to the chloroplast. It carries out the reaction RNA(n) + a ribonucleoside 5'-triphosphate = RNA(n+1) + diphosphate. DNA-dependent RNA polymerase catalyzes the transcription of DNA into RNA using the four ribonucleoside triphosphates as substrates. The protein is DNA-directed RNA polymerase subunit alpha of Chaetosphaeridium globosum (Charophycean green alga).